The sequence spans 264 residues: MTMTATMTTPLVLKLGGALLENETALEQLFTALSEYKSTSSRPLVLVHGGGCFVDELLAKMNIVSEKKNGLRITPFSDIGYITGALAGTANKVLMAQGLKSGAKVVGLSLADGGIATVTQSTAGLGAVGECEAGDPTLLTALLSGGFLPIISSIGIDAQGQLLNVNADQAATAICETLDADLVMLSDVAGILDADMQLIPEMNSNYAAELIAAGVINGGMEVKVKAALKAAASLNRDIKLASWKVPERLVALLNGEVEGTKVSS.

Substrate-binding positions include 50–51, Arg72, and Asn164; that span reads GG.

This sequence belongs to the acetylglutamate kinase family. ArgB subfamily.

Its subcellular location is the cytoplasm. It carries out the reaction N-acetyl-L-glutamate + ATP = N-acetyl-L-glutamyl 5-phosphate + ADP. Its pathway is amino-acid biosynthesis; L-arginine biosynthesis; N(2)-acetyl-L-ornithine from L-glutamate: step 2/4. In terms of biological role, catalyzes the ATP-dependent phosphorylation of N-acetyl-L-glutamate. The chain is Acetylglutamate kinase from Moritella profunda.